A 383-amino-acid chain; its full sequence is Dual-specificity RNA methyltransferase RlmN (383 aa).

Residue Glu95 is the Proton acceptor of the active site. Positions 101–349 constitute a Radical SAM core domain; it reads EETRGTLCVS…TTVRKTRGDD (249 aa). Cys108 and Cys354 form a disulfide bridge. [4Fe-4S] cluster is bound by residues Cys115, Cys119, and Cys122. S-adenosyl-L-methionine-binding positions include 180–181, Ser212, 234–236, and Asn311; these read GE and SLH. Cys354 (S-methylcysteine intermediate) is an active-site residue.

The protein belongs to the radical SAM superfamily. RlmN family. Requires [4Fe-4S] cluster as cofactor.

Its subcellular location is the cytoplasm. It carries out the reaction adenosine(2503) in 23S rRNA + 2 reduced [2Fe-2S]-[ferredoxin] + 2 S-adenosyl-L-methionine = 2-methyladenosine(2503) in 23S rRNA + 5'-deoxyadenosine + L-methionine + 2 oxidized [2Fe-2S]-[ferredoxin] + S-adenosyl-L-homocysteine. It catalyses the reaction adenosine(37) in tRNA + 2 reduced [2Fe-2S]-[ferredoxin] + 2 S-adenosyl-L-methionine = 2-methyladenosine(37) in tRNA + 5'-deoxyadenosine + L-methionine + 2 oxidized [2Fe-2S]-[ferredoxin] + S-adenosyl-L-homocysteine. Functionally, specifically methylates position 2 of adenine 2503 in 23S rRNA and position 2 of adenine 37 in tRNAs. m2A2503 modification seems to play a crucial role in the proofreading step occurring at the peptidyl transferase center and thus would serve to optimize ribosomal fidelity. In Paraburkholderia xenovorans (strain LB400), this protein is Dual-specificity RNA methyltransferase RlmN.